A 327-amino-acid chain; its full sequence is Ribose operon repressor (327 aa).

The 56-residue stretch at 1-56 (MTTIKQVALEAGVSKSTVSRFIAQNGYVSDEAREKIERAIKKLNFRPNLSAQSLKT) folds into the HTH lacI-type domain. The segment at residues 4 to 23 (IKQVALEAGVSKSTVSRFIA) is a DNA-binding region (H-T-H motif).

Functionally, transcriptional repressor for the ribose rbsDACBK operon. The protein is Ribose operon repressor (rbsR) of Lactococcus lactis subsp. lactis (strain IL1403) (Streptococcus lactis).